A 703-amino-acid chain; its full sequence is RING finger protein 214 (703 aa).

Disordered stretches follow at residues 1–59 (MAAS…TITK), 104–134 (GSQS…VTRS), and 146–197 (SRNC…SSSL). Position 2 is an N-acetylalanine (alanine 2). A phosphoserine mark is found at serine 15, serine 40, serine 47, and serine 54. A compositionally biased stretch (polar residues) spans 37 to 59 (TKDSAQKQKNSPLLSVSSQTITK). 2 positions are modified to phosphoserine: serine 176 and serine 196. Residues 220–379 (QDIEKNLDKM…AEKEAELHLT (160 aa)) are a coiled coil. The tract at residues 486 to 552 (FPILNPALSQ…SAETPRPQPV (67 aa)) is disordered. Low complexity predominate over residues 493 to 504 (LSQPSQPSSPLP). Phosphoserine occurs at positions 497, 511, and 516. Over residues 523–536 (PHMPPAASIPPPPG) the composition is skewed to pro residues. An RING-type; atypical zinc finger spans residues 658 to 700 (CLMCQKLVQPSELHPMACTHVLHKECIKFWAQTNTNDTCPFCP).

This Homo sapiens (Human) protein is RING finger protein 214 (RNF214).